The sequence spans 173 residues: NADH-ubiquinone oxidoreductase chain 6 (173 aa).

5 helical membrane-spanning segments follow: residues 1-21 (MTYF…GVAS), 27-47 (YGVV…LSLG), 48-68 (VSFV…VVFV), 87-107 (VVGY…IGGL), and 139-159 (CGVG…FVVL).

It belongs to the complex I subunit 6 family.

Its subcellular location is the mitochondrion membrane. It catalyses the reaction a ubiquinone + NADH + 5 H(+)(in) = a ubiquinol + NAD(+) + 4 H(+)(out). In terms of biological role, core subunit of the mitochondrial membrane respiratory chain NADH dehydrogenase (Complex I) that is believed to belong to the minimal assembly required for catalysis. Complex I functions in the transfer of electrons from NADH to the respiratory chain. The immediate electron acceptor for the enzyme is believed to be ubiquinone. This is NADH-ubiquinone oxidoreductase chain 6 (MT-ND6) from Synthliboramphus hypoleucus (Guadalupe murrelet).